The chain runs to 2936 residues: Neurobeachin (2936 aa).

The interval 961–985 is disordered; sequence ENIKKGKKGNVSTISGLSSQTAGAK. Polar residues predominate over residues 970 to 982; it reads NVSTISGLSSQTA. Residues serine 1001 and serine 1004 each carry the phosphoserine modification. Polar residues-rich tracts occupy residues 1203-1220 and 1231-1241; these read TSDG…SSTK and TLETESSNSKA. Disordered stretches follow at residues 1203 to 1222, 1231 to 1265, and 1270 to 1289; these read TSDG…TKGL, TLET…ESGK, and IQTT…QQDR. Over residues 1253 to 1265 the composition is skewed to basic and acidic residues; it reads DTERSDDGKESGK. The segment covering 1270–1286 has biased composition (polar residues); sequence IQTTATTQAVQGRSSTQ. The WD 1 repeat unit spans residues 1316-1358; the sequence is TTMFRIPEFKWSPMHQRLLTDLLFALETDVHVWRSHSTKSVMD. 4 disordered regions span residues 1480–1521, 1639–1667, 1701–1721, and 1830–1850; these read QRDR…LSPI, PDTV…DSGM, VKKS…PAPS, and TGAV…VNGA. Serine 1519 bears the Phosphoserine mark. Over residues 1701-1714 the composition is skewed to basic and acidic residues; that stretch reads VKKSQESLTEHPSE. Serine 1704 and serine 1707 each carry phosphoserine. A compositionally biased stretch (low complexity) spans 1835 to 1845; that stretch reads SGSSSSSSSSS. Phosphoserine is present on serine 2128. Positions 2137 to 2245 constitute a BEACH-type PH domain; that stretch reads NLAGPVVLST…TVKKVVYSLP (109 aa). One can recognise a BEACH domain in the interval 2264-2553; that stretch reads ATPRQLYKSS…QLLIEPHPPR (290 aa). Serine 2565 is modified (phosphoserine). WD repeat units lie at residues 2708–2751, 2768–2808, 2850–2889, and 2892–2931; these read GHWD…HIIG, GHDH…RALE, EIND…QLYI, and GCDA…WHYE.

This sequence belongs to the WD repeat neurobeachin family. Interacts with RII subunit of PKA. Forebrain, brainstem and cerebellum.

The protein resides in the membrane. It localises to the endomembrane system. Its subcellular location is the postsynaptic cell membrane. Binds to type II regulatory subunits of protein kinase A and anchors/targets them to the membrane. May anchor the kinase to cytoskeletal and/or organelle-associated proteins. May have a role in membrane trafficking. This Mus musculus (Mouse) protein is Neurobeachin (Nbea).